We begin with the raw amino-acid sequence, 195 residues long: Sec-independent protein translocase protein TatB (195 aa).

Residues 1–21 (MFDIGFSELALIAVVALVVLG) traverse the membrane as a helical segment. The segment at 130–195 (EPGSAQPHTP…SSTSPQEKTP (66 aa)) is disordered. Composition is skewed to low complexity over residues 145 to 157 (PVVA…APAP) and 175 to 195 (TTHA…EKTP).

It belongs to the TatB family. The Tat system comprises two distinct complexes: a TatABC complex, containing multiple copies of TatA, TatB and TatC subunits, and a separate TatA complex, containing only TatA subunits. Substrates initially bind to the TatABC complex, which probably triggers association of the separate TatA complex to form the active translocon.

The protein localises to the cell inner membrane. Its function is as follows. Part of the twin-arginine translocation (Tat) system that transports large folded proteins containing a characteristic twin-arginine motif in their signal peptide across membranes. Together with TatC, TatB is part of a receptor directly interacting with Tat signal peptides. TatB may form an oligomeric binding site that transiently accommodates folded Tat precursor proteins before their translocation. The chain is Sec-independent protein translocase protein TatB from Xanthomonas campestris pv. campestris (strain 8004).